A 197-amino-acid polypeptide reads, in one-letter code: Putative peptidyl-prolyl cis-trans isomerase (197 aa).

In terms of domain architecture, PPIase cyclophilin-type spans 14–195 (NEIKLIMHTN…HDITIDSIEI (182 aa)).

It belongs to the cyclophilin-type PPIase family.

It carries out the reaction [protein]-peptidylproline (omega=180) = [protein]-peptidylproline (omega=0). Its function is as follows. PPIases accelerate the folding of proteins. It catalyzes the cis-trans isomerization of proline imidic peptide bonds in oligopeptides. The protein is Putative peptidyl-prolyl cis-trans isomerase of Staphylococcus saprophyticus subsp. saprophyticus (strain ATCC 15305 / DSM 20229 / NCIMB 8711 / NCTC 7292 / S-41).